The primary structure comprises 144 residues: Transcription antitermination protein NusB (144 aa).

This sequence belongs to the NusB family.

Its function is as follows. Involved in transcription antitermination. Required for transcription of ribosomal RNA (rRNA) genes. Binds specifically to the boxA antiterminator sequence of the ribosomal RNA (rrn) operons. In Streptococcus agalactiae serotype Ia (strain ATCC 27591 / A909 / CDC SS700), this protein is Transcription antitermination protein NusB.